A 197-amino-acid polypeptide reads, in one-letter code: Ribosome maturation factor RimM (197 aa).

A PRC barrel domain is found at 99 to 174 (EDEFYQVDLI…LVVEPVAAGL (76 aa)).

Belongs to the RimM family. As to quaternary structure, binds ribosomal protein uS19.

Its subcellular location is the cytoplasm. An accessory protein needed during the final step in the assembly of 30S ribosomal subunit, possibly for assembly of the head region. Essential for efficient processing of 16S rRNA. May be needed both before and after RbfA during the maturation of 16S rRNA. It has affinity for free ribosomal 30S subunits but not for 70S ribosomes. The chain is Ribosome maturation factor RimM from Bartonella quintana (strain Toulouse) (Rochalimaea quintana).